A 467-amino-acid polypeptide reads, in one-letter code: ATP synthase subunit beta (467 aa).

152 to 159 (GGAGVGKT) serves as a coordination point for ATP.

This sequence belongs to the ATPase alpha/beta chains family. In terms of assembly, F-type ATPases have 2 components, CF(1) - the catalytic core - and CF(0) - the membrane proton channel. CF(1) has five subunits: alpha(3), beta(3), gamma(1), delta(1), epsilon(1). CF(0) has three main subunits: a(1), b(2) and c(9-12). The alpha and beta chains form an alternating ring which encloses part of the gamma chain. CF(1) is attached to CF(0) by a central stalk formed by the gamma and epsilon chains, while a peripheral stalk is formed by the delta and b chains.

The protein resides in the cell membrane. The enzyme catalyses ATP + H2O + 4 H(+)(in) = ADP + phosphate + 5 H(+)(out). Its function is as follows. Produces ATP from ADP in the presence of a proton gradient across the membrane. The catalytic sites are hosted primarily by the beta subunits. The chain is ATP synthase subunit beta from Caldicellulosiruptor bescii (strain ATCC BAA-1888 / DSM 6725 / KCTC 15123 / Z-1320) (Anaerocellum thermophilum).